A 302-amino-acid polypeptide reads, in one-letter code: MDQNNSLPPYAQGLASPQSAMTPGIPIFSPMMPYGTGLTPQPAQSTNSLSILEEQQRQQQQQQAAAQQSTSQPTQAPSGQTPQLFHSQTLTTAPLPGTTPLYPSPMTPMTPITPATPASESSGIVPQLQNIVSTVNLGCKLDLKTIALRARNAEYNPKRFAAVIMRIREPRTTALIFSSGKMVCTGAKSEEQSRLAARKYARVVQKLGFPAKFLDFKIQNMVGSCDVKFPIRLEGLVLTHQQFSSYEPELFPGLIYRMIKPRIVLLIFVSGKVVLTGAKVRGEIYEAFENIYPILKGFRKTT.

Disordered regions lie at residues 1-22 (MDQN…SAMT) and 53-122 (EEQQ…SESS). Composition is skewed to low complexity over residues 57–101 (RQQQ…TTPL) and 109–119 (MTPITPATPAS). 2 consecutive repeat copies span residues 128-204 (LQNI…ARVV) and 218-295 (IQNM…YPIL).

The protein belongs to the TBP family. Belongs to the TFIID complex together with the TBP-associated factors (TAFs). Binds DNA as monomer.

It is found in the nucleus. General transcription factor that functions at the core of the DNA-binding multiprotein factor TFIID. Binding of TFIID to the TATA box is the initial transcriptional step of the pre-initiation complex (PIC), playing a role in the activation of eukaryotic genes transcribed by RNA polymerase II. The polypeptide is TATA-box-binding protein (TBP) (Craspedocephalus gramineus (Bamboo pit viper)).